Here is a 163-residue protein sequence, read N- to C-terminus: uncharacterized protein (163 aa).

Residues 30 to 163 (GNENTSVSSD…IYKKLGKKKR (134 aa)) are disordered. Residues 88–118 (ERQLQKKKEAEKIEGGKNHDNLKRKLNKVGD) are compositionally biased toward basic and acidic residues. Residues 119–133 (ELNEQQSDTDDDDDD) are compositionally biased toward acidic residues. Serine 125 carries the post-translational modification Phosphoserine. Threonine 127 bears the Phosphothreonine mark.

The protein localises to the nucleus. It localises to the nucleolus. This is an uncharacterized protein from Schizosaccharomyces pombe (strain 972 / ATCC 24843) (Fission yeast).